The primary structure comprises 161 residues: Regulator of ribonuclease activity A (161 aa).

It belongs to the RraA family. As to quaternary structure, homotrimer. Binds to both RNA-binding sites in the C-terminal region of Rne and to RhlB.

Its subcellular location is the cytoplasm. Its function is as follows. Globally modulates RNA abundance by binding to RNase E (Rne) and regulating its endonucleolytic activity. Can modulate Rne action in a substrate-dependent manner by altering the composition of the degradosome. Modulates RNA-binding and helicase activities of the degradosome. The protein is Regulator of ribonuclease activity A of Klebsiella pneumoniae (strain 342).